We begin with the raw amino-acid sequence, 217 residues long: Large ribosomal subunit protein uL3 (217 aa).

A disordered region spans residues 129 to 161 (SRGPMSHGSKNHRAPGSTGAGTTPGRIYPGKRM). The span at 142 to 153 (APGSTGAGTTPG) shows a compositional bias: low complexity.

This sequence belongs to the universal ribosomal protein uL3 family. In terms of assembly, part of the 50S ribosomal subunit. Forms a cluster with proteins L14 and L19.

One of the primary rRNA binding proteins, it binds directly near the 3'-end of the 23S rRNA, where it nucleates assembly of the 50S subunit. The chain is Large ribosomal subunit protein uL3 from Prochlorococcus marinus subsp. pastoris (strain CCMP1986 / NIES-2087 / MED4).